Reading from the N-terminus, the 519-residue chain is MNNPRSVSPLVSPANHSDLLENQRQSGSGDFSRLEKRIGARKMKFHSKSMPRGAMFLDQEASRNFHDKRYDLFRTMSGKLERQISNLRGKPTESSLQDHKEITESLTADRYFDALQGPELETLKEKEKIVLPEDKTWPFLLRFPITSYGMCLGVSSQAIMWKTLATTEAEKFLHVTQVINHVLWWISLLLLLAVSITYLFKTILFFEAVRREFRHPIRVNFFFAPLISILFLALGIPHSIISHLPSTLWYFLMAPILFLEMKIYGQWMSGGQRRLSKVANPTNHLSIVGNFAGALLGASMGLKEGPIFFFAIGLAYYLVLFVTLYQRLPTNETLPKELHPVFFLFVAAPAVASMAWTKISASFDLGSRLAYFISLFLYFSLVCRINLFRGFKFSLAWWAYTFPMTAVASATIKYSDEVTGVATKILSVVMSGAATLTVIAVLGLTVMHAFVQRDLFPNDVVIAISAEQPKQKRWFKHLTKESYGNNERCPKILDPEDNQIDLESPPLVNVDSSTVQNSN.

Residues 1–31 (MNNPRSVSPLVSPANHSDLLENQRQSGSGDF) are disordered. Over 1–140 (MNNPRSVSPL…LPEDKTWPFL (140 aa)) the chain is Cytoplasmic. Residues 20–29 (LENQRQSGSG) show a composition bias toward polar residues. 2 positions are modified to phosphoserine: Ser77 and Ser85. A helical membrane pass occupies residues 141 to 161 (LRFPITSYGMCLGVSSQAIMW). Over 162-185 (KTLATTEAEKFLHVTQVINHVLWW) the chain is Extracellular. Residues 186-206 (ISLLLLLAVSITYLFKTILFF) traverse the membrane as a helical segment. The Cytoplasmic portion of the chain corresponds to 207-220 (EAVRREFRHPIRVN). Residues 221 to 241 (FFFAPLISILFLALGIPHSII) traverse the membrane as a helical segment. At 242-247 (SHLPST) the chain is on the extracellular side. The helical transmembrane segment at 248 to 268 (LWYFLMAPILFLEMKIYGQWM) threads the bilayer. At 269–281 (SGGQRRLSKVANP) the chain is on the cytoplasmic side. The chain crosses the membrane as a helical span at residues 282 to 302 (TNHLSIVGNFAGALLGASMGL). Residues 303–304 (KE) are Extracellular-facing. Residues 305-325 (GPIFFFAIGLAYYLVLFVTLY) traverse the membrane as a helical segment. Over 326–340 (QRLPTNETLPKELHP) the chain is Cytoplasmic. Residues 341–361 (VFFLFVAAPAVASMAWTKISA) traverse the membrane as a helical segment. Ser362 is a topological domain (extracellular). The chain crosses the membrane as a helical span at residues 363-383 (FDLGSRLAYFISLFLYFSLVC). Topologically, residues 384 to 389 (RINLFR) are cytoplasmic. The helical transmembrane segment at 390 to 410 (GFKFSLAWWAYTFPMTAVASA) threads the bilayer. At 411-424 (TIKYSDEVTGVATK) the chain is on the extracellular side. The chain crosses the membrane as a helical span at residues 425 to 445 (ILSVVMSGAATLTVIAVLGLT). At 446 to 519 (VMHAFVQRDL…VDSSTVQNSN (74 aa)) the chain is on the cytoplasmic side. The interval 495 to 519 (PEDNQIDLESPPLVNVDSSTVQNSN) is disordered. The span at 510–519 (VDSSTVQNSN) shows a compositional bias: polar residues.

This sequence belongs to the SLAC1 S-type anion channel family. Homotrimer. Expressed in lateral root primordia and tap root tips.

The protein localises to the cell membrane. Slow, weak voltage-dependent S-type anion efflux channel involved in maintenance of anion homeostasis. The chain is S-type anion channel SLAH2 (SLAH2) from Arabidopsis thaliana (Mouse-ear cress).